We begin with the raw amino-acid sequence, 487 residues long: b(0,+)-type amino acid transporter 1 (487 aa).

The interval 1 to 20 (MEETSLRRRREDEKSTHSTE) is disordered. Topologically, residues 1-31 (MEETSLRRRREDEKSTHSTELKTTSLQKEVG) are cytoplasmic. S18 is modified (phosphoserine). Residues 32–55 (LLSGICIIVGTIIGSGIFISPKSV) traverse the membrane as a helical segment. An L-arginine-binding site is contributed by 43–47 (IIGSG). The Extracellular portion of the chain corresponds to 56 to 62 (LANTESV). Residues 63-84 (GPCLIIWAACGILATLGALCFA) traverse the membrane as a helical segment. Topologically, residues 85 to 110 (ELGTMITKSGGEYPYLMEAFGPIPAY) are cytoplasmic. Residues 111-137 (LFSWTSLIVMKPSSFAIICLSFSEYVC) form a helical membrane-spanning segment. Topologically, residues 138–147 (AAFYSGCKPP) are extracellular. 2 consecutive transmembrane segments (helical) span residues 148 to 169 (AVVVKLLAAAAILFITTVNALS) and 170 to 193 (VRLGSYVQNVFTAAKMVIVAIIII). Residues 194–217 (SGLVFLAQGNVKNFQNSFEGTQTS) lie on the Extracellular side of the membrane. Residues 218–238 (VGAISLAFYNGLWAYDGWNQL) traverse the membrane as a helical segment. D233 lines the L-arginine pocket. At 239–251 (NYITEELRNPYRN) the chain is on the cytoplasmic side. The chain crosses the membrane as a helical span at residues 252–274 (LPMAIVIGIPLVTVCYILMNIAY). Residues 275–302 (FTVMTPTELLQSQAVAVTFGDRVLYPAS) lie on the Extracellular side of the membrane. Residues 303-325 (WVVPLFVAFSTIGAANGTCFTAG) form a helical membrane-spanning segment. Residues 326-351 (RLIYVAGREGHMLKVLSYISVKRLTP) are Cytoplasmic-facing. 2 helical membrane passes run 352-370 (APALIFYGIIAIIYIIPGD) and 371-391 (INSLVNYFSFAAWLFYGMTIL). Residues 392–410 (GLVVMRFTRKDLERPIKVP) lie on the Cytoplasmic side of the membrane. The chain crosses the membrane as a helical span at residues 411-431 (LFIPIIVILVSLFLILAPIIS). Residues 432-434 (EPA) lie on the Extracellular side of the membrane. The chain crosses the membrane as a helical span at residues 435–450 (WEYLYCVLFILSGLIF). Residues 451–487 (YFLFVYYKFGWAQRISRPVTKHLQMLMEVVPPEKDPE) are Cytoplasmic-facing.

This sequence belongs to the amino acid-polyamine-organocation (APC) superfamily. In terms of assembly, disulfide-linked heterodimer composed of the catalytic light chain subunit SLC7A9 and the heavy chain subunit SLC3A1. The heterodimer is the minimal functional unit. Assembles in heterotetramers (dimers of heterodimers) and higher order oligomers; the oligomerization is mediated by SLC3A1 likely to prevent degradation and facilitate heteromer trafficking to the plasma membrane. Interacts with CAV1. As to expression, expressed in the brush border membrane in the kidney (at protein level).

The protein resides in the apical cell membrane. The enzyme catalyses L-leucine(out) + L-arginine(in) = L-leucine(in) + L-arginine(out). It catalyses the reaction L-histidine(out) + L-arginine(in) = L-histidine(in) + L-arginine(out). It carries out the reaction L-arginine(in) + L-phenylalanine(out) = L-arginine(out) + L-phenylalanine(in). The catalysed reaction is L-cysteine(out) + L-arginine(in) = L-cysteine(in) + L-arginine(out). The enzyme catalyses L-cystine(out) + L-arginine(in) = L-cystine(in) + L-arginine(out). It catalyses the reaction L-lysine(out) + L-arginine(in) = L-lysine(in) + L-arginine(out). Associates with SLC3A1 to form a functional transporter complex that mediates the electrogenic exchange between cationic amino acids and neutral amino acids, with a stoichiometry of 1:1. Has system b(0,+)-like activity with high affinity for extracellular cationic amino acids and L-cystine and lower affinity for intracellular neutral amino acids. Substrate exchange is driven by high concentration of intracellular neutral amino acids and the intracellular reduction of L-cystine to L-cysteine. Required for reabsorption of L-cystine and dibasic amino acids across the brush border membrane in renal proximal tubules. The sequence is that of b(0,+)-type amino acid transporter 1 (Slc7a9) from Mus musculus (Mouse).